The primary structure comprises 448 residues: Trigger factor (448 aa).

Positions 163 to 248 constitute a PPIase FKBP-type domain; that stretch reads GDIVVIDFDG…VKDIRVPKAA (86 aa).

It belongs to the FKBP-type PPIase family. Tig subfamily.

Its subcellular location is the cytoplasm. It carries out the reaction [protein]-peptidylproline (omega=180) = [protein]-peptidylproline (omega=0). Functionally, involved in protein export. Acts as a chaperone by maintaining the newly synthesized protein in an open conformation. Functions as a peptidyl-prolyl cis-trans isomerase. This Rhodospirillum centenum (strain ATCC 51521 / SW) protein is Trigger factor.